The chain runs to 256 residues: D-aminoacyl-tRNA deacylase (256 aa).

Belongs to the DtdA deacylase family. In terms of assembly, monomer. It depends on Zn(2+) as a cofactor.

It catalyses the reaction a D-aminoacyl-tRNA + H2O = a tRNA + a D-alpha-amino acid + H(+). It carries out the reaction glycyl-tRNA(Ala) + H2O = tRNA(Ala) + glycine + H(+). In terms of biological role, D-aminoacyl-tRNA deacylase with broad substrate specificity. By recycling D-aminoacyl-tRNA to D-amino acids and free tRNA molecules, this enzyme counteracts the toxicity associated with the formation of D-aminoacyl-tRNA entities in vivo. The protein is D-aminoacyl-tRNA deacylase of Thermoplasma acidophilum (strain ATCC 25905 / DSM 1728 / JCM 9062 / NBRC 15155 / AMRC-C165).